We begin with the raw amino-acid sequence, 484 residues long: tRNA sulfurtransferase (484 aa).

The THUMP domain maps to 63–167; sequence EAFGERLACI…NEQLYLVDKR (105 aa). ATP is bound by residues 185-186, Lys-267, Gly-289, and Gln-298; that span reads LI. Cys-346 and Cys-458 are disulfide-bonded. In terms of domain architecture, Rhodanese spans 406-484; that stretch reads ISADEVIIDV…GYSNVKVYRP (79 aa). Catalysis depends on Cys-458, which acts as the Cysteine persulfide intermediate.

The protein belongs to the ThiI family.

The protein localises to the cytoplasm. The enzyme catalyses [ThiI sulfur-carrier protein]-S-sulfanyl-L-cysteine + a uridine in tRNA + 2 reduced [2Fe-2S]-[ferredoxin] + ATP + H(+) = [ThiI sulfur-carrier protein]-L-cysteine + a 4-thiouridine in tRNA + 2 oxidized [2Fe-2S]-[ferredoxin] + AMP + diphosphate. The catalysed reaction is [ThiS sulfur-carrier protein]-C-terminal Gly-Gly-AMP + S-sulfanyl-L-cysteinyl-[cysteine desulfurase] + AH2 = [ThiS sulfur-carrier protein]-C-terminal-Gly-aminoethanethioate + L-cysteinyl-[cysteine desulfurase] + A + AMP + 2 H(+). It functions in the pathway cofactor biosynthesis; thiamine diphosphate biosynthesis. Functionally, catalyzes the ATP-dependent transfer of a sulfur to tRNA to produce 4-thiouridine in position 8 of tRNAs, which functions as a near-UV photosensor. Also catalyzes the transfer of sulfur to the sulfur carrier protein ThiS, forming ThiS-thiocarboxylate. This is a step in the synthesis of thiazole, in the thiamine biosynthesis pathway. The sulfur is donated as persulfide by IscS. The chain is tRNA sulfurtransferase from Shewanella piezotolerans (strain WP3 / JCM 13877).